The chain runs to 191 residues: Guanylate kinase (191 aa).

Positions 8–188 (GRLVVLAGPS…AVSDIKEILV (181 aa)) constitute a Guanylate kinase-like domain. Residue 15 to 22 (GPSAVGKS) coordinates ATP.

It belongs to the guanylate kinase family.

It is found in the cytoplasm. It carries out the reaction GMP + ATP = GDP + ADP. Functionally, essential for recycling GMP and indirectly, cGMP. The sequence is that of Guanylate kinase from Corynebacterium diphtheriae (strain ATCC 700971 / NCTC 13129 / Biotype gravis).